The following is a 40-amino-acid chain: Mastoparan-like peptide 12c (40 aa).

The signal sequence occupies residues 1 to 7; it reads MSAEALA. A disordered region spans residues 1–22; sequence MSAEALADPKADPLAGPNPDAD. 4 AXPX repeats span residues 7–10, 11–14, 15–18, and 19–22; these read ADPK, ADPL, AGPN, and PDAD. Residues 8-25 constitute a propeptide that is removed on maturation; the sequence is DPKADPLAGPNPDADPEA. L39 carries the leucine amide modification.

Belongs to the MCD family. Mastoparan subfamily. Expressed by the venom gland.

It localises to the secreted. Shows mast cell degranulation and antimicrobial activities against the Gram-negative bacteria E.coli ATCC 25922 (MIC=6.0 ug/ml), the Gram-positive bacteria S.aureus ATCC 2592 (MIC=3.0 ug/ml) and the fungus C.albicans ATCC 2002 (MIC=12 ug/ml). Exhibits little hemolytic activity against washed human erythrocytes. Its mast cell degranulation activity may be related to the activation of G-protein coupled receptors in mast cells as well as interaction with other proteins located in cell endosomal membranes in the mast cells. This Vespa magnifica (Hornet) protein is Mastoparan-like peptide 12c.